The primary structure comprises 450 residues: MGKYFGTDGVRGVANSELTPEFAFKLGRIGGYVLTKDATDRPKVLIGRDTRISGEMLEGALVAGLLSIGVEVMRLGIISTPGVAYLTRIMSADAGVMISASHNPVADNGIKFFGPDGFKLTDAQEEEIEVLLDAQEDTLPRPIGADLGSVSDYFEGGQKYIQYLKQTVDEEFDGIHVALDCAHGATSSLATHLFADLEADISTMGSSPNGLNINDGVGSTHPEGLAKFVLEKDADVGLAFDGDGDRLIAVDENGKIVDGDQIMFIIGKYLNAVGRLKKQTIVSTVMSNMGFYKAVEDNGMQSIQTAVGDRYVVEEMRANDYNLGGEQSGHIVFLDFNTTGDGLLTGIQLVNIMKATGKKLSELAAEMKIYPQRLVNVRVTDKHAVTENTKVAAVIAEVEAAMAGNGRVLVRPSGTEPLVRVMVEAATETACERFVERIADVVRAEMGLTD.

The Phosphoserine intermediate role is filled by S101. Mg(2+) is bound by residues S101, D241, D243, and D245. A Phosphoserine modification is found at S101.

It belongs to the phosphohexose mutase family. Mg(2+) serves as cofactor. In terms of processing, activated by phosphorylation.

It carries out the reaction alpha-D-glucosamine 1-phosphate = D-glucosamine 6-phosphate. Its function is as follows. Catalyzes the conversion of glucosamine-6-phosphate to glucosamine-1-phosphate. This chain is Phosphoglucosamine mutase, found in Lysinibacillus sphaericus (strain C3-41).